A 63-amino-acid polypeptide reads, in one-letter code: Large ribosomal subunit protein uL30 (63 aa).

It belongs to the universal ribosomal protein uL30 family. As to quaternary structure, part of the 50S ribosomal subunit.

This chain is Large ribosomal subunit protein uL30, found in Xylella fastidiosa (strain M23).